Consider the following 101-residue polypeptide: NAD(P)H-quinone oxidoreductase subunit 4L, chloroplastic (101 aa).

3 helical membrane passes run methionine 2–isoleucine 22, methionine 32–phenylalanine 52, and isoleucine 61–valine 81.

This sequence belongs to the complex I subunit 4L family. In terms of assembly, NDH is composed of at least 16 different subunits, 5 of which are encoded in the nucleus.

It localises to the plastid. The protein resides in the chloroplast thylakoid membrane. The enzyme catalyses a plastoquinone + NADH + (n+1) H(+)(in) = a plastoquinol + NAD(+) + n H(+)(out). It carries out the reaction a plastoquinone + NADPH + (n+1) H(+)(in) = a plastoquinol + NADP(+) + n H(+)(out). NDH shuttles electrons from NAD(P)H:plastoquinone, via FMN and iron-sulfur (Fe-S) centers, to quinones in the photosynthetic chain and possibly in a chloroplast respiratory chain. The immediate electron acceptor for the enzyme in this species is believed to be plastoquinone. Couples the redox reaction to proton translocation, and thus conserves the redox energy in a proton gradient. The polypeptide is NAD(P)H-quinone oxidoreductase subunit 4L, chloroplastic (Helianthus annuus (Common sunflower)).